The chain runs to 330 residues: Ketol-acid reductoisomerase (NADP(+)) (330 aa).

In terms of domain architecture, KARI N-terminal Rossmann spans 1 to 181; the sequence is MNVYYEQDAD…GGAKAGVIET (181 aa). Residues 24-27, Arg-47, Ser-50, Ser-52, and 82-85 each bind NADP(+); these read YGSQ and DQYQ. Residue His-107 is part of the active site. Gly-133 contributes to the NADP(+) binding site. The 146-residue stretch at 182–327 folds into the KARI C-terminal knotted domain; it reads TIKNETETDL…AKLRNMMSWL (146 aa). Asp-190, Glu-194, Glu-226, and Glu-230 together coordinate Mg(2+). Position 251 (Ser-251) interacts with substrate.

Belongs to the ketol-acid reductoisomerase family. The cofactor is Mg(2+).

It catalyses the reaction (2R)-2,3-dihydroxy-3-methylbutanoate + NADP(+) = (2S)-2-acetolactate + NADPH + H(+). The enzyme catalyses (2R,3R)-2,3-dihydroxy-3-methylpentanoate + NADP(+) = (S)-2-ethyl-2-hydroxy-3-oxobutanoate + NADPH + H(+). It participates in amino-acid biosynthesis; L-isoleucine biosynthesis; L-isoleucine from 2-oxobutanoate: step 2/4. Its pathway is amino-acid biosynthesis; L-valine biosynthesis; L-valine from pyruvate: step 2/4. Its function is as follows. Involved in the biosynthesis of branched-chain amino acids (BCAA). Catalyzes an alkyl-migration followed by a ketol-acid reduction of (S)-2-acetolactate (S2AL) to yield (R)-2,3-dihydroxy-isovalerate. In the isomerase reaction, S2AL is rearranged via a Mg-dependent methyl migration to produce 3-hydroxy-3-methyl-2-ketobutyrate (HMKB). In the reductase reaction, this 2-ketoacid undergoes a metal-dependent reduction by NADPH to yield (R)-2,3-dihydroxy-isovalerate. The chain is Ketol-acid reductoisomerase (NADP(+)) from Chlorobium phaeovibrioides (strain DSM 265 / 1930) (Prosthecochloris vibrioformis (strain DSM 265)).